Reading from the N-terminus, the 136-residue chain is Outer envelope pore protein 16-4, chloroplastic (136 aa).

The tract at residues 1-59 is contains 4 beta strands; it reads MEEELLSAVPCSSLTVESVLRVATAGGLYGLCAGPRDARKIGLSGVSQASFVAKSIGRF. 4 helical membrane-spanning segments follow: residues 18–34, 56–72, 86–102, and 110–126; these read SVLR…LCAG, IGRF…VFTM, WVNA…AVAI, and VVGM…LANC.

It belongs to the Tim17/Tim22/Tim23 family. Plastid outer envelope porin OEP16 (TC 1.B.30) subfamily. Homodimer and oligomers in membrane.

The protein localises to the plastid. It is found in the chloroplast outer membrane. Functionally, voltage-dependent high-conductance channel with a slight cation-selectivity; selective for amino acids but excludes triosephosphates or uncharged sugars. Non-essential amino acid-selective channel protein and translocation pore for NADPH:protochlorophyllide oxidoreductase A (PORA) and possibly PORB. The chain is Outer envelope pore protein 16-4, chloroplastic (OEP164) from Arabidopsis thaliana (Mouse-ear cress).